A 965-amino-acid polypeptide reads, in one-letter code: Translation initiation factor IF-2 (965 aa).

The segment at 94 to 375 (RTFVRRDEAA…RGKHQESTTF (282 aa)) is disordered. A compositionally biased stretch (low complexity) spans 104 to 115 (EQAAEATGNGQE). The segment covering 121 to 177 (ELQRREEEARHEAELLEKQAQELKARQEQLAREEAERQAREQAAEAERRRAEEEAAK) has biased composition (basic and acidic residues). Residues 181–191 (AAVAEAAAAAR) show a composition bias toward low complexity. Over residues 192-253 (EQAEQERASQ…KAEAEARAIR (62 aa)) the composition is skewed to basic and acidic residues. A compositionally biased stretch (pro residues) spans 267–276 (PEPPPKPAEA). Over residues 303–320 (KKPAPAAAAQPAATTQPA) the composition is skewed to low complexity. Residues 351 to 364 (TSGGVDRGWRGGPK) are compositionally biased toward gly residues. The region spanning 465–634 (PRPPVVTVMG…LLQAEVLELK (170 aa)) is the tr-type G domain. Residues 474 to 481 (GHVDHGKT) form a G1 region. 474–481 (GHVDHGKT) is a binding site for GTP. The G2 stretch occupies residues 499 to 503 (GITQH). The interval 520–523 (DTPG) is G3. GTP contacts are provided by residues 520–524 (DTPGH) and 574–577 (NKID). Residues 574–577 (NKID) form a G4 region. The segment at 610–612 (SAK) is G5.

It belongs to the TRAFAC class translation factor GTPase superfamily. Classic translation factor GTPase family. IF-2 subfamily.

The protein resides in the cytoplasm. In terms of biological role, one of the essential components for the initiation of protein synthesis. Protects formylmethionyl-tRNA from spontaneous hydrolysis and promotes its binding to the 30S ribosomal subunits. Also involved in the hydrolysis of GTP during the formation of the 70S ribosomal complex. This Paraburkholderia phymatum (strain DSM 17167 / CIP 108236 / LMG 21445 / STM815) (Burkholderia phymatum) protein is Translation initiation factor IF-2.